We begin with the raw amino-acid sequence, 348 residues long: Erythronate-4-phosphate dehydrogenase (348 aa).

Positions 46 and 67 each coordinate substrate. An NAD(+)-binding site is contributed by aspartate 147. Residue arginine 209 is part of the active site. Aspartate 233 provides a ligand contact to NAD(+). Glutamate 238 is a catalytic residue. Histidine 255 acts as the Proton donor in catalysis. Glycine 258 contacts NAD(+). Substrate is bound at residue tyrosine 259.

This sequence belongs to the D-isomer specific 2-hydroxyacid dehydrogenase family. PdxB subfamily. In terms of assembly, homodimer.

It localises to the cytoplasm. It carries out the reaction 4-phospho-D-erythronate + NAD(+) = (R)-3-hydroxy-2-oxo-4-phosphooxybutanoate + NADH + H(+). The protein operates within cofactor biosynthesis; pyridoxine 5'-phosphate biosynthesis; pyridoxine 5'-phosphate from D-erythrose 4-phosphate: step 2/5. Catalyzes the oxidation of erythronate-4-phosphate to 3-hydroxy-2-oxo-4-phosphonooxybutanoate. The chain is Erythronate-4-phosphate dehydrogenase from Bacteroides thetaiotaomicron (strain ATCC 29148 / DSM 2079 / JCM 5827 / CCUG 10774 / NCTC 10582 / VPI-5482 / E50).